Reading from the N-terminus, the 230-residue chain is Large ribosomal subunit protein uL1 (230 aa).

Belongs to the universal ribosomal protein uL1 family. As to quaternary structure, part of the 50S ribosomal subunit.

Binds directly to 23S rRNA. The L1 stalk is quite mobile in the ribosome, and is involved in E site tRNA release. Its function is as follows. Protein L1 is also a translational repressor protein, it controls the translation of the L11 operon by binding to its mRNA. This chain is Large ribosomal subunit protein uL1, found in Lactobacillus johnsonii (strain CNCM I-12250 / La1 / NCC 533).